We begin with the raw amino-acid sequence, 151 residues long: UPF0756 membrane protein Lreu_0946 (151 aa).

The next 4 membrane-spanning stretches (helical) occupy residues 4-24 (WLFLALVLLIAIFGHNSSLII), 52-72 (WGVTVISVAILIPIATGQIGF), 77-97 (AAFKTPAGWIAVGMGIAVAIL), and 115-135 (LVLGTIIGVVAFKGIAAGPVI).

This sequence belongs to the UPF0756 family.

The protein resides in the cell membrane. In Limosilactobacillus reuteri (strain DSM 20016) (Lactobacillus reuteri), this protein is UPF0756 membrane protein Lreu_0946.